We begin with the raw amino-acid sequence, 472 residues long: Flotillin-like protein 6 (472 aa).

Cysteine 37 carries the S-palmitoyl cysteine lipid modification. A coiled-coil region spans residues 237–327 (ENQREAEVAQ…ELYKKQKEAE (91 aa)).

Belongs to the band 7/mec-2 family. Flotillin subfamily. In terms of processing, may be palmitoylated. Very low occasional expression in roots and nodules.

Its subcellular location is the cell membrane. The protein localises to the membrane. It localises to the caveola. Its function is as follows. May act as a scaffolding protein within caveolar membranes, functionally participating in formation of caveolae or caveolae-like vesicles. May be involved in nodule formation. The chain is Flotillin-like protein 6 (FLOT6) from Medicago truncatula (Barrel medic).